The primary structure comprises 425 residues: 5'-deoxyadenosine deaminase (425 aa).

Residues His62 and His64 each contribute to the Zn(2+) site. Substrate-binding residues include Glu91 and His183. A Zn(2+)-binding site is contributed by His210. Substrate-binding residues include Glu213 and Asp298. Residue Asp298 coordinates Zn(2+).

Belongs to the metallo-dependent hydrolases superfamily. MTA/SAH deaminase family. In terms of assembly, homotetramer. Requires Zn(2+) as cofactor.

It catalyses the reaction 5'-deoxyadenosine + H2O + H(+) = 5'-deoxyinosine + NH4(+). It carries out the reaction S-adenosyl-L-homocysteine + H2O + H(+) = S-inosyl-L-homocysteine + NH4(+). The catalysed reaction is S-methyl-5'-thioadenosine + H2O + H(+) = S-methyl-5'-thioinosine + NH4(+). The enzyme catalyses adenosine + H2O + H(+) = inosine + NH4(+). The protein operates within amino-acid biosynthesis; S-adenosyl-L-methionine biosynthesis. Functionally, catalyzes the deamination of three SAM-derived enzymatic products, namely 5'-deoxyadenosine, S-adenosyl-L-homocysteine, and 5'-methylthioadenosine, to produce the inosine analogs. Can also deaminate adenosine. The preferred substrate for this enzyme is 5'-deoxyadenosine, but all these substrates are efficiently deaminated. Likely functions in a S-adenosyl-L-methionine (SAM) recycling pathway from S-adenosyl-L-homocysteine (SAH) produced from SAM-dependent methylation reactions. May also be involved in the recycling of 5'-deoxyadenosine, whereupon the 5'-deoxyribose moiety of 5'-deoxyinosine is further metabolized to deoxyhexoses used for the biosynthesis of aromatic amino acids in methanogens. The sequence is that of 5'-deoxyadenosine deaminase from Methanosphaera stadtmanae (strain ATCC 43021 / DSM 3091 / JCM 11832 / MCB-3).